A 147-amino-acid chain; its full sequence is D-aminoacyl-tRNA deacylase (147 aa).

A Gly-cisPro motif, important for rejection of L-amino acids motif is present at residues 139 to 140; sequence GP.

The protein belongs to the DTD family. In terms of assembly, homodimer.

Its subcellular location is the cytoplasm. The catalysed reaction is glycyl-tRNA(Ala) + H2O = tRNA(Ala) + glycine + H(+). The enzyme catalyses a D-aminoacyl-tRNA + H2O = a tRNA + a D-alpha-amino acid + H(+). Its function is as follows. An aminoacyl-tRNA editing enzyme that deacylates mischarged D-aminoacyl-tRNAs. Also deacylates mischarged glycyl-tRNA(Ala), protecting cells against glycine mischarging by AlaRS. Acts via tRNA-based rather than protein-based catalysis; rejects L-amino acids rather than detecting D-amino acids in the active site. By recycling D-aminoacyl-tRNA to D-amino acids and free tRNA molecules, this enzyme counteracts the toxicity associated with the formation of D-aminoacyl-tRNA entities in vivo and helps enforce protein L-homochirality. The protein is D-aminoacyl-tRNA deacylase of Rippkaea orientalis (strain PCC 8801 / RF-1) (Cyanothece sp. (strain PCC 8801)).